Consider the following 341-residue polypeptide: Anthranilate phosphoribosyltransferase (341 aa).

5-phospho-alpha-D-ribose 1-diphosphate-binding positions include Gly-84, 87 to 88, Thr-92, 94 to 97, 112 to 120, and Ser-124; these read GD, NIST, and KHGNRSVSS. An anthranilate-binding site is contributed by Gly-84. Ser-96 contributes to the Mg(2+) binding site. Asn-115 is a binding site for anthranilate. Arg-170 lines the anthranilate pocket. Positions 229 and 230 each coordinate Mg(2+).

Belongs to the anthranilate phosphoribosyltransferase family. Homodimer. The cofactor is Mg(2+).

The catalysed reaction is N-(5-phospho-beta-D-ribosyl)anthranilate + diphosphate = 5-phospho-alpha-D-ribose 1-diphosphate + anthranilate. It functions in the pathway amino-acid biosynthesis; L-tryptophan biosynthesis; L-tryptophan from chorismate: step 2/5. Functionally, catalyzes the transfer of the phosphoribosyl group of 5-phosphorylribose-1-pyrophosphate (PRPP) to anthranilate to yield N-(5'-phosphoribosyl)-anthranilate (PRA). This chain is Anthranilate phosphoribosyltransferase, found in Polynucleobacter necessarius subsp. necessarius (strain STIR1).